The sequence spans 143 residues: Small ribosomal subunit protein bS18 (143 aa).

The segment at 1 to 72 (MARPDMGGPK…RGGEEGGRRG (72 aa)) is disordered. The segment covering 10-50 (KSSGGFGGPRSGGGFGGGGYGGGGGGGGGYGGGGGGGFGGR) has biased composition (gly residues). Positions 51–70 (GGDRGDRGDRDDRGGEEGGR) are enriched in basic and acidic residues.

The protein belongs to the bacterial ribosomal protein bS18 family. In terms of assembly, part of the 30S ribosomal subunit. Forms a tight heterodimer with protein bS6.

Functionally, binds as a heterodimer with protein bS6 to the central domain of the 16S rRNA, where it helps stabilize the platform of the 30S subunit. This chain is Small ribosomal subunit protein bS18, found in Anaeromyxobacter sp. (strain Fw109-5).